The primary structure comprises 299 residues: Probable GTP 3',8-cyclase (299 aa).

The region spanning 4–229 (LHNREIKSLR…MQNRKKYLVD (226 aa)) is the Radical SAM core domain. Arginine 13 contacts GTP. [4Fe-4S] cluster-binding residues include cysteine 20 and cysteine 24. S-adenosyl-L-methionine is bound at residue tyrosine 26. Position 27 (cysteine 27) interacts with [4Fe-4S] cluster. Lysine 61 is a binding site for GTP. Glycine 65 contacts S-adenosyl-L-methionine. Threonine 94 provides a ligand contact to GTP. Serine 118 lines the S-adenosyl-L-methionine pocket. Residue lysine 154 participates in GTP binding. [4Fe-4S] cluster-binding residues include cysteine 245 and cysteine 248. 250–252 (RIR) is a binding site for GTP. Cysteine 262 lines the [4Fe-4S] cluster pocket.

Belongs to the radical SAM superfamily. MoaA family. Requires [4Fe-4S] cluster as cofactor.

The catalysed reaction is GTP + AH2 + S-adenosyl-L-methionine = (8S)-3',8-cyclo-7,8-dihydroguanosine 5'-triphosphate + 5'-deoxyadenosine + L-methionine + A + H(+). It participates in cofactor biosynthesis; molybdopterin biosynthesis. In terms of biological role, catalyzes the cyclization of GTP to (8S)-3',8-cyclo-7,8-dihydroguanosine 5'-triphosphate. The protein is Probable GTP 3',8-cyclase of Methanococcus aeolicus (strain ATCC BAA-1280 / DSM 17508 / OCM 812 / Nankai-3).